The sequence spans 177 residues: Large ribosomal subunit protein uL6 (177 aa).

Belongs to the universal ribosomal protein uL6 family. As to quaternary structure, part of the 50S ribosomal subunit.

This protein binds to the 23S rRNA, and is important in its secondary structure. It is located near the subunit interface in the base of the L7/L12 stalk, and near the tRNA binding site of the peptidyltransferase center. The polypeptide is Large ribosomal subunit protein uL6 (Rhodopseudomonas palustris (strain BisA53)).